The following is a 332-amino-acid chain: Nucleoid-associated protein VP2128 (332 aa).

The protein belongs to the YejK family.

It is found in the cytoplasm. The protein resides in the nucleoid. In Vibrio parahaemolyticus serotype O3:K6 (strain RIMD 2210633), this protein is Nucleoid-associated protein VP2128.